The chain runs to 453 residues: Bifunctional protein GlmU (453 aa).

The segment at 1–226 (MKFSTVILAA…SIEVEGVNDR (226 aa)) is pyrophosphorylase. UDP-N-acetyl-alpha-D-glucosamine is bound by residues 8 to 11 (LAAG), K22, Q73, 78 to 79 (GT), 100 to 102 (YGD), G137, E151, N166, and N224. D102 is a Mg(2+) binding site. N224 provides a ligand contact to Mg(2+). The tract at residues 227 to 247 (IQLARLERAFQARQAKKLLEQ) is linker. The interval 248–453 (GVMLRDPARF…AGWQRPAKKK (206 aa)) is N-acetyltransferase. UDP-N-acetyl-alpha-D-glucosamine is bound by residues R330 and K348. The Proton acceptor role is filled by H360. Residues Y363 and N374 each contribute to the UDP-N-acetyl-alpha-D-glucosamine site. Residues A377, 383–384 (NY), S402, A420, and R437 contribute to the acetyl-CoA site.

It in the N-terminal section; belongs to the N-acetylglucosamine-1-phosphate uridyltransferase family. This sequence in the C-terminal section; belongs to the transferase hexapeptide repeat family. In terms of assembly, homotrimer. The cofactor is Mg(2+).

The protein resides in the cytoplasm. It catalyses the reaction alpha-D-glucosamine 1-phosphate + acetyl-CoA = N-acetyl-alpha-D-glucosamine 1-phosphate + CoA + H(+). It carries out the reaction N-acetyl-alpha-D-glucosamine 1-phosphate + UTP + H(+) = UDP-N-acetyl-alpha-D-glucosamine + diphosphate. It participates in nucleotide-sugar biosynthesis; UDP-N-acetyl-alpha-D-glucosamine biosynthesis; N-acetyl-alpha-D-glucosamine 1-phosphate from alpha-D-glucosamine 6-phosphate (route II): step 2/2. It functions in the pathway nucleotide-sugar biosynthesis; UDP-N-acetyl-alpha-D-glucosamine biosynthesis; UDP-N-acetyl-alpha-D-glucosamine from N-acetyl-alpha-D-glucosamine 1-phosphate: step 1/1. The protein operates within bacterial outer membrane biogenesis; LPS lipid A biosynthesis. In terms of biological role, catalyzes the last two sequential reactions in the de novo biosynthetic pathway for UDP-N-acetylglucosamine (UDP-GlcNAc). The C-terminal domain catalyzes the transfer of acetyl group from acetyl coenzyme A to glucosamine-1-phosphate (GlcN-1-P) to produce N-acetylglucosamine-1-phosphate (GlcNAc-1-P), which is converted into UDP-GlcNAc by the transfer of uridine 5-monophosphate (from uridine 5-triphosphate), a reaction catalyzed by the N-terminal domain. The sequence is that of Bifunctional protein GlmU from Vibrio cholerae serotype O1 (strain ATCC 39541 / Classical Ogawa 395 / O395).